Here is a 134-residue protein sequence, read N- to C-terminus: ATP synthase epsilon chain, chloroplastic (134 aa).

The protein belongs to the ATPase epsilon chain family. As to quaternary structure, F-type ATPases have 2 components, CF(1) - the catalytic core - and CF(0) - the membrane proton channel. CF(1) has five subunits: alpha(3), beta(3), gamma(1), delta(1), epsilon(1). CF(0) has three main subunits: a, b and c.

It localises to the plastid. It is found in the chloroplast thylakoid membrane. In terms of biological role, produces ATP from ADP in the presence of a proton gradient across the membrane. The polypeptide is ATP synthase epsilon chain, chloroplastic (Chlorella vulgaris (Green alga)).